Reading from the N-terminus, the 168-residue chain is Phosphopantetheine adenylyltransferase (168 aa).

A substrate-binding site is contributed by threonine 17. ATP contacts are provided by residues 17-18 (TF) and histidine 25. The substrate site is built by lysine 49, leucine 81, and arginine 95. ATP is bound by residues 96 to 98 (GLR), glutamate 106, and 131 to 137 (LMYISST).

Belongs to the bacterial CoaD family. Homohexamer. The cofactor is Mg(2+).

The protein localises to the cytoplasm. The catalysed reaction is (R)-4'-phosphopantetheine + ATP + H(+) = 3'-dephospho-CoA + diphosphate. It functions in the pathway cofactor biosynthesis; coenzyme A biosynthesis; CoA from (R)-pantothenate: step 4/5. Functionally, reversibly transfers an adenylyl group from ATP to 4'-phosphopantetheine, yielding dephospho-CoA (dPCoA) and pyrophosphate. In Legionella pneumophila (strain Paris), this protein is Phosphopantetheine adenylyltransferase.